The sequence spans 267 residues: Phosphate import ATP-binding protein PstB (267 aa).

In terms of domain architecture, ABC transporter spans 21 to 262; it reads VAARNLDFYY…PSKQQTEDYI (242 aa). ATP is bound at residue 53–60; that stretch reads GPSGCGKS.

The protein belongs to the ABC transporter superfamily. Phosphate importer (TC 3.A.1.7) family. The complex is composed of two ATP-binding proteins (PstB), two transmembrane proteins (PstC and PstA) and a solute-binding protein (PstS).

Its subcellular location is the cell inner membrane. The enzyme catalyses phosphate(out) + ATP + H2O = ADP + 2 phosphate(in) + H(+). Functionally, part of the ABC transporter complex PstSACB involved in phosphate import. Responsible for energy coupling to the transport system. In Xanthomonas oryzae pv. oryzae (strain MAFF 311018), this protein is Phosphate import ATP-binding protein PstB.